The chain runs to 144 residues: Large ribosomal subunit protein uL16 (144 aa).

Over residues M1–R16 the composition is skewed to basic residues. The tract at residues M1–Q22 is disordered.

This sequence belongs to the universal ribosomal protein uL16 family. As to quaternary structure, part of the 50S ribosomal subunit.

Functionally, binds 23S rRNA and is also seen to make contacts with the A and possibly P site tRNAs. This chain is Large ribosomal subunit protein uL16, found in Parabacteroides distasonis (strain ATCC 8503 / DSM 20701 / CIP 104284 / JCM 5825 / NCTC 11152).